A 351-amino-acid chain; its full sequence is Heat shock factor protein HSF30 (351 aa).

A DNA-binding region spans residues 29-123 (PPPFLSKTYE…LLKTIKRRRN (95 aa)).

It belongs to the HSF family. As to quaternary structure, homotrimer. In terms of processing, exhibits temperature-dependent phosphorylation.

It is found in the nucleus. DNA-binding protein that specifically binds heat shock promoter elements (HSE) and activates transcription. The chain is Heat shock factor protein HSF30 (HSF30) from Solanum peruvianum (Peruvian tomato).